Reading from the N-terminus, the 294-residue chain is Pyrroline-5-carboxylate reductase (294 aa).

This sequence belongs to the pyrroline-5-carboxylate reductase family.

It localises to the cytoplasm. The catalysed reaction is L-proline + NADP(+) = (S)-1-pyrroline-5-carboxylate + NADPH + 2 H(+). The enzyme catalyses L-proline + NAD(+) = (S)-1-pyrroline-5-carboxylate + NADH + 2 H(+). It functions in the pathway amino-acid biosynthesis; L-proline biosynthesis; L-proline from L-glutamate 5-semialdehyde: step 1/1. Its function is as follows. Catalyzes the reduction of 1-pyrroline-5-carboxylate (PCA) to L-proline. This is Pyrroline-5-carboxylate reductase from Mycobacterium leprae (strain TN).